Reading from the N-terminus, the 585-residue chain is A-type ATP synthase subunit A (585 aa).

231 to 238 (GPFGSGKT) contributes to the ATP binding site.

Belongs to the ATPase alpha/beta chains family. As to quaternary structure, has multiple subunits with at least A(3), B(3), C, D, E, F, H, I and proteolipid K(x).

Its subcellular location is the cell membrane. It catalyses the reaction ATP + H2O + 4 H(+)(in) = ADP + phosphate + 5 H(+)(out). In terms of biological role, component of the A-type ATP synthase that produces ATP from ADP in the presence of a proton gradient across the membrane. The A chain is the catalytic subunit. This Thermococcus sibiricus (strain DSM 12597 / MM 739) protein is A-type ATP synthase subunit A.